The sequence spans 325 residues: Tetraacyldisaccharide 4'-kinase (325 aa).

Residue 54–61 participates in ATP binding; that stretch reads SVGGTGKT.

Belongs to the LpxK family.

It catalyses the reaction a lipid A disaccharide + ATP = a lipid IVA + ADP + H(+). The protein operates within glycolipid biosynthesis; lipid IV(A) biosynthesis; lipid IV(A) from (3R)-3-hydroxytetradecanoyl-[acyl-carrier-protein] and UDP-N-acetyl-alpha-D-glucosamine: step 6/6. Its function is as follows. Transfers the gamma-phosphate of ATP to the 4'-position of a tetraacyldisaccharide 1-phosphate intermediate (termed DS-1-P) to form tetraacyldisaccharide 1,4'-bis-phosphate (lipid IVA). The chain is Tetraacyldisaccharide 4'-kinase from Rickettsia felis (strain ATCC VR-1525 / URRWXCal2) (Rickettsia azadi).